A 464-amino-acid chain; its full sequence is MDYDFKVKLSSERERVEDLFEYEGCKVGRGTYGHVYKAKRKDGKDDKDYALKQIEGTGISMSACREIALLRELKHPNVISLLKVFLSHADRKVWLLFDYAEHDLWHIIKFHRASKANKKPVQLPRGMVKSLLYQILDGIHYLHANWVLHRDLKPANILVMGEGPERGRVKIADMGFARLFNSPLKPLADLDPVVVTFWYRAPELLLGARHYTKAIDIWAIGCIFAELLTSEPIFHCRQEDIKTSNPYHHDQLDRIFNVMGFPADKDWEDIKKMPEHSTLMKDFRRNTYTNCSLIKYMEKHKVKPDSKAFHLLQKLLTMDPIKRITSEQAMQDPYFLEDPLPTSDVFAGCQIPYPKREFLTEEEPDEKGDKKTQQQQQGNNHTNGTGHPGNQDSGHAQGPPLKKVRVVPPTTTSGGLIMTSDYQRSNPHAAYPNPGPSTSQPQSSMGYSATSQQPPQYSHQTHRY.

Residues 1-15 (MDYDFKVKLSSERER) form an interaction with CCNC region. One can recognise a Protein kinase domain in the interval 21–335 (EYEGCKVGRG…SEQAMQDPYF (315 aa)). Residues 27–35 (VGRGTYGHV) and Lys-52 contribute to the ATP site. Asp-151 acts as the Proton acceptor in catalysis. The disordered stretch occupies residues 358-464 (FLTEEEPDEK…PQYSHQTHRY (107 aa)). Over residues 373–391 (QQQQQGNNHTNGTGHPGNQ) the composition is skewed to low complexity. 2 stretches are compositionally biased toward polar residues: residues 409 to 426 (PTTTSGGLIMTSDYQRSN) and 436 to 464 (PSTSQPQSSMGYSATSQQPPQYSHQTHRY).

Belongs to the protein kinase superfamily. CMGC Ser/Thr protein kinase family. CDC2/CDKX subfamily. Component of the Mediator complex, which is composed of MED1, MED4, MED6, MED7, MED8, MED9, MED10, MED11, MED12, MED13, MED13L, MED14, MED15, MED16, MED17, MED18, MED19, MED20, MED21, MED22, MED23, MED24, MED25, MED26, MED27, MED29, MED30, MED31, CCNC, CDK8 and CDC2L6/CDK11. The MED12, MED13, CCNC and CDK8 subunits form a distinct module termed the CDK8 module. Mediator containing the CDK8 module is less active than Mediator lacking this module in supporting transcriptional activation. Individual preparations of the Mediator complex lacking one or more distinct subunits have been variously termed ARC, CRSP, DRIP, PC2, SMCC and TRAP. The cylin/CDK pair formed by CCNC/CDK8 also associates with the large subunit of RNA polymerase II. Interacts with CTNNB1, GLI3 and MAML1. The cofactor is Mg(2+).

The protein resides in the nucleus. The catalysed reaction is L-seryl-[protein] + ATP = O-phospho-L-seryl-[protein] + ADP + H(+). It carries out the reaction L-threonyl-[protein] + ATP = O-phospho-L-threonyl-[protein] + ADP + H(+). It catalyses the reaction [DNA-directed RNA polymerase] + ATP = phospho-[DNA-directed RNA polymerase] + ADP + H(+). Its function is as follows. Component of the Mediator complex, a coactivator involved in regulated gene transcription of nearly all RNA polymerase II-dependent genes. Mediator functions as a bridge to convey information from gene-specific regulatory proteins to the basal RNA polymerase II transcription machinery. Mediator is recruited to promoters by direct interactions with regulatory proteins and serves as a scaffold for the assembly of a functional pre-initiation complex with RNA polymerase II and the general transcription factors. Phosphorylates the CTD (C-terminal domain) of the large subunit of RNA polymerase II (RNAp II), which may inhibit the formation of a transcription initiation complex. Phosphorylates CCNH leading to down-regulation of the TFIIH complex and transcriptional repression. Recruited through interaction with MAML1 to hyperphosphorylate the intracellular domain of NOTCH, leading to its degradation. The chain is Cyclin-dependent kinase 8 (Cdk8) from Mus musculus (Mouse).